The following is a 436-amino-acid chain: Tol-Pal system protein TolB (436 aa).

Positions 1-19 (MVKCSLIRALMVVAGLVGA) are cleaved as a signal peptide.

The protein belongs to the TolB family. In terms of assembly, the Tol-Pal system is composed of five core proteins: the inner membrane proteins TolA, TolQ and TolR, the periplasmic protein TolB and the outer membrane protein Pal. They form a network linking the inner and outer membranes and the peptidoglycan layer.

It is found in the periplasm. Functionally, part of the Tol-Pal system, which plays a role in outer membrane invagination during cell division and is important for maintaining outer membrane integrity. This is Tol-Pal system protein TolB from Rhizobium etli (strain ATCC 51251 / DSM 11541 / JCM 21823 / NBRC 15573 / CFN 42).